A 341-amino-acid polypeptide reads, in one-letter code: S-adenosylmethionine:tRNA ribosyltransferase-isomerase (341 aa).

This sequence belongs to the QueA family. As to quaternary structure, monomer.

It is found in the cytoplasm. The enzyme catalyses 7-aminomethyl-7-carbaguanosine(34) in tRNA + S-adenosyl-L-methionine = epoxyqueuosine(34) in tRNA + adenine + L-methionine + 2 H(+). Its pathway is tRNA modification; tRNA-queuosine biosynthesis. Its function is as follows. Transfers and isomerizes the ribose moiety from AdoMet to the 7-aminomethyl group of 7-deazaguanine (preQ1-tRNA) to give epoxyqueuosine (oQ-tRNA). This is S-adenosylmethionine:tRNA ribosyltransferase-isomerase from Chlorobium luteolum (strain DSM 273 / BCRC 81028 / 2530) (Pelodictyon luteolum).